We begin with the raw amino-acid sequence, 487 residues long: UDP-N-acetylmuramoyl-L-alanyl-D-glutamate--2,6-diaminopimelate ligase (487 aa).

S30 provides a ligand contact to UDP-N-acetyl-alpha-D-muramoyl-L-alanyl-D-glutamate. 109–115 is an ATP binding site; sequence GTNGKTS. UDP-N-acetyl-alpha-D-muramoyl-L-alanyl-D-glutamate is bound by residues 151–152, S178, and R186; that span reads TT. K218 carries the N6-carboxylysine modification. Residues R379, 403–406, G455, and E459 contribute to the meso-2,6-diaminopimelate site; that span reads DNPR. The short motif at 403–406 is the Meso-diaminopimelate recognition motif element; sequence DNPR.

The protein belongs to the MurCDEF family. MurE subfamily. Requires Mg(2+) as cofactor. Post-translationally, carboxylation is probably crucial for Mg(2+) binding and, consequently, for the gamma-phosphate positioning of ATP.

It is found in the cytoplasm. It catalyses the reaction UDP-N-acetyl-alpha-D-muramoyl-L-alanyl-D-glutamate + meso-2,6-diaminopimelate + ATP = UDP-N-acetyl-alpha-D-muramoyl-L-alanyl-gamma-D-glutamyl-meso-2,6-diaminopimelate + ADP + phosphate + H(+). It functions in the pathway cell wall biogenesis; peptidoglycan biosynthesis. Functionally, catalyzes the addition of meso-diaminopimelic acid to the nucleotide precursor UDP-N-acetylmuramoyl-L-alanyl-D-glutamate (UMAG) in the biosynthesis of bacterial cell-wall peptidoglycan. The protein is UDP-N-acetylmuramoyl-L-alanyl-D-glutamate--2,6-diaminopimelate ligase of Alkaliphilus oremlandii (strain OhILAs) (Clostridium oremlandii (strain OhILAs)).